The primary structure comprises 197 residues: Probable GTP-binding protein EngB (197 aa).

Residues 22–195 (QLPELALAGR…WRTILNHLKV (174 aa)) form the EngB-type G domain. GTP is bound by residues 30 to 37 (GRSNVGKS), 57 to 61 (GKTQT), 75 to 78 (DVPG), 142 to 145 (TKAD), and 174 to 176 (FSS). Serine 37 and threonine 59 together coordinate Mg(2+).

It belongs to the TRAFAC class TrmE-Era-EngA-EngB-Septin-like GTPase superfamily. EngB GTPase family. It depends on Mg(2+) as a cofactor.

Necessary for normal cell division and for the maintenance of normal septation. This is Probable GTP-binding protein EngB from Shouchella clausii (strain KSM-K16) (Alkalihalobacillus clausii).